The sequence spans 212 residues: Uracil phosphoribosyltransferase (212 aa).

Residues R78, R103, and 130 to 138 (DPMLATGSS) contribute to the 5-phospho-alpha-D-ribose 1-diphosphate site. Uracil contacts are provided by residues I193 and 198 to 200 (GDA). D199 lines the 5-phospho-alpha-D-ribose 1-diphosphate pocket.

It belongs to the UPRTase family. It depends on Mg(2+) as a cofactor.

The catalysed reaction is UMP + diphosphate = 5-phospho-alpha-D-ribose 1-diphosphate + uracil. It participates in pyrimidine metabolism; UMP biosynthesis via salvage pathway; UMP from uracil: step 1/1. Allosterically activated by GTP. Catalyzes the conversion of uracil and 5-phospho-alpha-D-ribose 1-diphosphate (PRPP) to UMP and diphosphate. This is Uracil phosphoribosyltransferase from Pseudomonas fluorescens (strain SBW25).